We begin with the raw amino-acid sequence, 318 residues long: Methionyl-tRNA formyltransferase (318 aa).

A (6S)-5,6,7,8-tetrahydrofolate-binding site is contributed by 111-114; that stretch reads SLLP.

This sequence belongs to the Fmt family.

The catalysed reaction is L-methionyl-tRNA(fMet) + (6R)-10-formyltetrahydrofolate = N-formyl-L-methionyl-tRNA(fMet) + (6S)-5,6,7,8-tetrahydrofolate + H(+). Functionally, attaches a formyl group to the free amino group of methionyl-tRNA(fMet). The formyl group appears to play a dual role in the initiator identity of N-formylmethionyl-tRNA by promoting its recognition by IF2 and preventing the misappropriation of this tRNA by the elongation apparatus. The sequence is that of Methionyl-tRNA formyltransferase from Chlorobium limicola (strain DSM 245 / NBRC 103803 / 6330).